Here is a 45-residue protein sequence, read N- to C-terminus: uncharacterized protein (45 aa).

A helical transmembrane segment spans residues 15–37 (EVVGTLMAVLITFALVAVVFNFI).

The protein resides in the membrane. This is an uncharacterized protein from Archaeoglobus fulgidus (strain ATCC 49558 / DSM 4304 / JCM 9628 / NBRC 100126 / VC-16).